We begin with the raw amino-acid sequence, 542 residues long: TNF receptor-associated factor 6 (542 aa).

An interaction with TAX1BP1 region spans residues 1–374 (MSLLHCENSC…EAQQCNGIYI (374 aa)). Residues 71-110 (CPICLMALREAVQTPCGHRFCKACIIKSIRDAGHKCPVDN) form an RING-type; degenerate zinc finger. K125 is covalently cross-linked (Glycyl lysine isopeptide (Lys-Gly) (interchain with G-Cter in SUMO); alternate). A Glycyl lysine isopeptide (Lys-Gly) (interchain with G-Cter in ubiquitin); alternate cross-link involves residue K125. K143 is covalently cross-linked (Glycyl lysine isopeptide (Lys-Gly) (interchain with G-Cter in SUMO)). 2 TRAF-type zinc fingers span residues 151–203 (EHQA…EDKE) and 204–260 (IHEQ…NHLA). Residues 310–368 (SEVHNFQETIQQLEGRLVRQDHQIRELTAKMETQSMYVNELKRTIRTLEDKVAEIEAQQ) adopt a coiled-coil conformation. Residue K339 forms a Glycyl lysine isopeptide (Lys-Gly) (interchain with G-Cter in ubiquitin) linkage. The MATH domain maps to 370–519 (NGIYIWKIGN…DDTLLVRCEV (150 aa)). The interval 375-542 (WKIGNFGMHL…FQPRSTDSGI (168 aa)) is interaction with TANK. K473 participates in a covalent cross-link: Glycyl lysine isopeptide (Lys-Gly) (interchain with G-Cter in SUMO).

The protein belongs to the TNF receptor-associated factor family. A subfamily. Homotrimer. Homooligomer. N-terminal region is dimeric while C-terminal region is trimeric; maybe providing a mode of oligomerization. Upon IL1B treatment, forms a complex with PELI1, IRAK1, IRAK4 and MYD88; this complex recruits MAP3K7/TAK1, TAB1 and TAB2 to mediate NF-kappa-B activation. Direct binding of SMAD6 to PELI1 prevents the complex formation and hence negatively regulates IL1R-TLR signaling and eventually NF-kappa-B-mediated gene expression. Binds to TNFRSF5/CD40 and TNFRSF11A/RANK. Associates with NGFR, TNFRSF17, IRAK2, IRAK3, RIPK2, MAP3K1, MAP3K5, MAP3K14, CSK, TRAF, TRAF-interacting protein TRIP and TNF receptor associated protein TDP2. Interacts with IL17R. Interacts with SQSTM1 bridging NTRK1 and NGFR. Forms a ternary complex with SQSTM1 and PRKCZ. Interacts with PELI2 and PELI3. Binds UBE2V1. Interacts with TAX1BP1; this interaction mediates deubiquitination of TRAF6 and inhibition of NF-kappa-B activation. Interacts with ZNF675. Interacts with ARRB1 and ARRB2. Interacts with MAP3K7 and TAB1/MAP3K7IP1; during IL-1 signaling. Interacts with UBE2N. Interacts with TGFBR1, HDAC1 and RANGAP1. Interacts with AKT1, AKT2 and AKT3. Interacts (via TRAF domains) with NUMBL (via C-terminal). Interacts with RBCK1. Interacts with LIMD1 (via LIM domains). Interacts with RSAD2/viperin. Interacts (via C-terminus) with EIF2AK2/PKR (via the kinase catalytic domain). Interacts with ZFAND5. Interacts with IL1RL1. Interacts with TRAFD1. Interacts with AJUBA. Interacts with MAVS/IPS1. Interacts (via TRAF domains) with DYNC2I2 (via WD domains). Interacts with IFIT3 (via N-terminus). Interacts with TICAM2. Interacts with CARD14. Interacts with CD40 and MAP3K8; the interaction is required for ERK activation. Interacts with TICAM1 and this interaction is enhanced in the presence of WDFY1. Interacts with TANK; this interaction increases in response to DNA damage. Interacts with USP10; this interaction increases in response to DNA damage. Interacts with ZC3H12A; this interaction increases in response to DNA damage and is stimulated by TANK. Interacts with WDFY3. Interacts with TRIM13. Interacts with GPS2. Interacts (via C-terminus) with SASH1. Interacts with LRRC19. Interacts with IL17RA and TRAF3IP2. Interacts with TOMM70. Interacts with AMBRA1; interaction is required to mediate 'Lys-63'-linked ubiquitination of ULK1. Interacts with CRBN; this interaction inhibits TLR4-mediated signaling by preventing TRAF6-mediated ubiquitination of ECSIT. In terms of processing, sumoylated on Lys-125, Lys-143 and Lys-473 with SUMO1. Post-translationally, polyubiquitinated on Lys-125 by TRAF3IP2; after cell stimulation with IL17A. Polyubiquitinated on Lys-125; after cell stimulation with IL1B or TGFB. This ligand-induced cell stimulation leads to dimerization/oligomerization of TRAF6 molecules, followed by auto-ubiquitination which involves UBE2N and UBE2V1 and leads to TRAF6 activation. This 'Lys-63' site-specific poly-ubiquitination appears to be associated with the activation of signaling molecules. Endogenous autoubiquitination occurs only for the cytoplasmic form. Deubiquitinated by USP10 in a TANK-dependent manner, leading to the negative regulation of NF-kappa-B signaling upon DNA damage. LRRC19 induces 'Lys-63' ubiquitination. Ubiquitinated at Lys-339 by the SCF(FBXL2) complex, leading to its degradation by the proteasome.

Its subcellular location is the cytoplasm. It is found in the cell cortex. The protein resides in the nucleus. The protein localises to the lipid droplet. The catalysed reaction is S-ubiquitinyl-[E2 ubiquitin-conjugating enzyme]-L-cysteine + [acceptor protein]-L-lysine = [E2 ubiquitin-conjugating enzyme]-L-cysteine + N(6)-ubiquitinyl-[acceptor protein]-L-lysine.. It functions in the pathway protein modification; protein ubiquitination. E3 ubiquitin ligase that, together with UBE2N and UBE2V1, mediates the synthesis of 'Lys-63'-linked-polyubiquitin chains conjugated to proteins, such as ECSIT, IKBKG, IRAK1, AKT1 and AKT2. Also mediates ubiquitination of free/unanchored polyubiquitin chain that leads to MAP3K7 activation. Leads to the activation of NF-kappa-B and JUN. Seems to also play a role in dendritic cells (DCs) maturation and/or activation. Represses c-Myb-mediated transactivation, in B-lymphocytes. Adapter protein that seems to play a role in signal transduction initiated via TNF receptor, IL-1 receptor and IL-17 receptor. Regulates osteoclast differentiation by mediating the activation of adapter protein complex 1 (AP-1) and NF-kappa-B, in response to RANK-L stimulation. Together with MAP3K8, mediates CD40 signals that activate ERK in B-cells and macrophages, and thus may play a role in the regulation of immunoglobulin production. Acts as a regulator of the JNK and NF-kappa-B signaling pathways by initiating assembly of heterotypic 'Lys-63'-/'Lys-48'-linked branched ubiquitin chains that are then recognized by TAB2: TRAF6 catalyzes initial 'Lys-63'-linked-polyubiquitin chains that are then branched via 'Lys-48'-linked polyubiquitin by HUWE1. 'Lys-63'-/'Lys-48'-linked branched ubiquitin chains protect 'Lys-63'-linkages from CYLD deubiquitination. Also participates in the TCR signaling by ubiquitinating LAT. In Bos taurus (Bovine), this protein is TNF receptor-associated factor 6 (TRAF6).